A 117-amino-acid chain; its full sequence is NADH-ubiquinone oxidoreductase chain 3 (117 aa).

Transmembrane regions (helical) follow at residues 5–25 (ALSS…AWVL), 57–77 (FFLL…LMPL), and 86–106 (VFTT…GLIH).

It belongs to the complex I subunit 3 family.

Its subcellular location is the mitochondrion membrane. The catalysed reaction is a ubiquinone + NADH + 5 H(+)(in) = a ubiquinol + NAD(+) + 4 H(+)(out). Its function is as follows. Core subunit of the mitochondrial membrane respiratory chain NADH dehydrogenase (Complex I) that is believed to belong to the minimal assembly required for catalysis. Complex I functions in the transfer of electrons from NADH to the respiratory chain. The immediate electron acceptor for the enzyme is believed to be ubiquinone. This chain is NADH-ubiquinone oxidoreductase chain 3 (ND3), found in Lumbricus terrestris (Common earthworm).